A 175-amino-acid chain; its full sequence is Enhancer of mRNA-decapping protein 1 (175 aa).

The segment covering 1 to 27 (MSTDTMYFNSSRLLPSAGRNKTNNLIK) has biased composition (polar residues). Disordered stretches follow at residues 1–113 (MSTD…KDDT) and 155–175 (GSTF…PSFL). An N-acetylserine modification is found at Ser-2. The segment covering 35 to 47 (ARGNAAKNANNNN) has biased composition (low complexity). A compositionally biased stretch (polar residues) spans 58–77 (LPNGQKPNFGHSSNKKPSFN). A Phosphoserine modification is found at Ser-82. Basic and acidic residues predominate over residues 100–113 (NNKETPRQNNKDDT).

The protein belongs to the EDC family.

The protein resides in the cytoplasm. In terms of biological role, mRNA-binding protein which stimulates mRNA decapping by DCP1 and DCP2. Involved in the regulation of expression of multiple genes involved in glycolysis and gluconeogenesis. The chain is Enhancer of mRNA-decapping protein 1 (EDC1) from Saccharomyces cerevisiae (strain ATCC 204508 / S288c) (Baker's yeast).